The sequence spans 205 residues: Small ribosomal subunit protein uS4 (205 aa).

A compositionally biased stretch (basic residues) spans 1–12; sequence MSKRVQAKHKLD. The segment at 1–49 is disordered; the sequence is MSKRVQAKHKLDRRMGQNIWGRPKSPVNRREYGPGQHGQRRKGKMSDFG. Residues 94-155 enclose the S4 RNA-binding domain; sequence RRLDAVVYRS…ASRQLEIVVV (62 aa).

The protein belongs to the universal ribosomal protein uS4 family. As to quaternary structure, part of the 30S ribosomal subunit. Contacts protein S5. The interaction surface between S4 and S5 is involved in control of translational fidelity.

One of the primary rRNA binding proteins, it binds directly to 16S rRNA where it nucleates assembly of the body of the 30S subunit. Functionally, with S5 and S12 plays an important role in translational accuracy. The sequence is that of Small ribosomal subunit protein uS4 from Methylorubrum extorquens (strain CM4 / NCIMB 13688) (Methylobacterium extorquens).